The primary structure comprises 106 residues: UPF0145 protein CLH_2273 (106 aa).

This sequence belongs to the UPF0145 family.

The sequence is that of UPF0145 protein CLH_2273 from Clostridium botulinum (strain Alaska E43 / Type E3).